Reading from the N-terminus, the 260-residue chain is Potassium inward rectifier (Kir)-like channel 3 (260 aa).

The disordered stretch occupies residues 1–34 (MPMTPSEFKNRLLFGSLPRSSSDPTDLQFTEPNV). Topologically, residues 1–68 (MPMTPSEFKN…EQSVSKSIAR (68 aa)) are cytoplasmic. Positions 18-31 (PRSSSDPTDLQFTE) are enriched in polar residues. Residues 69-89 (QALALLVVYLSLGVLIYWLTL) traverse the membrane as a helical segment. The pore-forming intramembrane region spans 127 to 146 (DSFCFSVMMVTTVGFGDRAF). Residues 153-173 (FLAAVWLLVSTLAVARAFLFL) form a helical membrane-spanning segment. Topologically, residues 174–260 (ADARADKRNR…LVDLTTATSV (87 aa)) are cytoplasmic. EF-hand domains lie at 190–225 (LGES…QMEK) and 229–256 (EDFI…DLTT). 9 residues coordinate Ca(2+): Asp203, Asp205, Asp207, Arg209, Glu214, Asp242, Ser246, Arg248, and Asp253.

It belongs to the two pore domain potassium channel (TC 1.A.1.7) family. Homotetramer. Expressed in hydathodes and the vascular tissues of roots, stems, leaves and flowers.

The protein localises to the vacuole membrane. Probable calcium-activated potassium channel. This chain is Potassium inward rectifier (Kir)-like channel 3 (KCO3), found in Arabidopsis thaliana (Mouse-ear cress).